A 438-amino-acid chain; its full sequence is ATP-dependent protease ATPase subunit HslU (438 aa).

Residues isoleucine 18, 60–65, aspartate 251, glutamate 316, and arginine 388 each bind ATP; that span reads GVGKTE.

Belongs to the ClpX chaperone family. HslU subfamily. A double ring-shaped homohexamer of HslV is capped on each side by a ring-shaped HslU homohexamer. The assembly of the HslU/HslV complex is dependent on binding of ATP.

The protein localises to the cytoplasm. In terms of biological role, ATPase subunit of a proteasome-like degradation complex; this subunit has chaperone activity. The binding of ATP and its subsequent hydrolysis by HslU are essential for unfolding of protein substrates subsequently hydrolyzed by HslV. HslU recognizes the N-terminal part of its protein substrates and unfolds these before they are guided to HslV for hydrolysis. The chain is ATP-dependent protease ATPase subunit HslU from Jannaschia sp. (strain CCS1).